A 319-amino-acid polypeptide reads, in one-letter code: Olfactory receptor 56B4 (319 aa).

At 1–31 (MDTSTSVTYDSSLQISQFILMGLPGIHEWQH) the chain is on the extracellular side. A helical membrane pass occupies residues 32 to 52 (WLSLPLTLLYLLALGANLLII). Over 53-60 (ITIQHETV) the chain is Cytoplasmic. Residues 61 to 81 (LHEPMYHLLGILAVVDIGLAT) form a helical membrane-spanning segment. Topologically, residues 82 to 105 (TIMPKILAIFWFDAKAISLPMCFA) are extracellular. The cysteines at positions 103 and 195 are disulfide-linked. The helical transmembrane segment at 106–126 (QIYAIHCFFCIESGIFLCMAV) threads the bilayer. The Cytoplasmic segment spans residues 127-145 (DRYIAICRPLQYPSIVTKA). A helical membrane pass occupies residues 146–166 (FVFKATGFIMLRNGLLTIPVP). Residues 167-202 (ILAAQRHYCSRNEIEHCLCSNLGVISLACDDITVNK) lie on the Extracellular side of the membrane. The helical transmembrane segment at 203–223 (FYQLMLAWVLVGSDMALVFSS) threads the bilayer. The Cytoplasmic segment spans residues 224–243 (YAVILHSVLRLNSAEAMSKA). The chain crosses the membrane as a helical span at residues 244–263 (LSTCSSHLILILFHTGIIVL). Residues 264–277 (SVTHLAEKKIPLIP) are Extracellular-facing. Residues 278–298 (VFLNVLHNVIPPALNPLACAL) form a helical membrane-spanning segment. Residues 299-319 (RMHKLRLGFQRLLGLGQDVSK) lie on the Cytoplasmic side of the membrane.

It belongs to the G-protein coupled receptor 1 family.

The protein localises to the cell membrane. Its function is as follows. Odorant receptor. This is Olfactory receptor 56B4 (OR56B4) from Homo sapiens (Human).